The chain runs to 236 residues: Small ribosomal subunit protein uS3 (236 aa).

Positions 39 to 107 constitute a KH type-2 domain; it reads IREVLEKQLK…EVHLNIVEVR (69 aa). The interval 214-236 is disordered; it reads ASERRALEGGDSGGGRSRRDDRG.

It belongs to the universal ribosomal protein uS3 family. As to quaternary structure, part of the 30S ribosomal subunit. Forms a tight complex with proteins S10 and S14.

Binds the lower part of the 30S subunit head. Binds mRNA in the 70S ribosome, positioning it for translation. The protein is Small ribosomal subunit protein uS3 of Parvibaculum lavamentivorans (strain DS-1 / DSM 13023 / NCIMB 13966).